The primary structure comprises 296 residues: Isoprenyl transferase (296 aa).

Residues 1 to 11 show a composition bias toward basic residues; the sequence is MATERNRRRKG. The segment at 1-29 is disordered; sequence MATERNRRRKGSYPQLPPAPDDYPTFPDK. Residue Asp-76 is part of the active site. Residue Asp-76 participates in Mg(2+) binding. Residues 77-80, Trp-81, Arg-89, His-93, and 121-123 each bind substrate; these read GNGR and STE. Asn-124 serves as the catalytic Proton acceptor. Substrate-binding positions include Trp-125, Arg-127, Arg-244, and 250-252; that span reads RAS. Position 263 (Glu-263) interacts with Mg(2+).

The protein belongs to the UPP synthase family. As to quaternary structure, homodimer. The cofactor is Mg(2+).

In terms of biological role, catalyzes the condensation of isopentenyl diphosphate (IPP) with allylic pyrophosphates generating different type of terpenoids. The protein is Isoprenyl transferase of Mycolicibacterium parafortuitum (Mycobacterium parafortuitum).